Here is a 419-residue protein sequence, read N- to C-terminus: Chalcone synthase D (419 aa).

Residue cysteine 164 is part of the active site.

This sequence belongs to the thiolase-like superfamily. Chalcone/stilbene synthases family.

It catalyses the reaction (E)-4-coumaroyl-CoA + 3 malonyl-CoA + 3 H(+) = 2',4,4',6'-tetrahydroxychalcone + 3 CO2 + 4 CoA. It functions in the pathway secondary metabolite biosynthesis; flavonoid biosynthesis. The primary product of this enzyme is 4,2',4',6'-tetrahydroxychalcone (also termed naringenin-chalcone or chalcone) which can under specific conditions spontaneously isomerize into naringenin. This Petunia hybrida (Petunia) protein is Chalcone synthase D (CHSD).